Consider the following 143-residue polypeptide: Ribosome-binding factor A (143 aa).

The segment at Asp123–Arg143 is disordered.

It belongs to the RbfA family. Monomer. Binds 30S ribosomal subunits, but not 50S ribosomal subunits or 70S ribosomes.

The protein resides in the cytoplasm. In terms of biological role, one of several proteins that assist in the late maturation steps of the functional core of the 30S ribosomal subunit. Associates with free 30S ribosomal subunits (but not with 30S subunits that are part of 70S ribosomes or polysomes). Required for efficient processing of 16S rRNA. May interact with the 5'-terminal helix region of 16S rRNA. The sequence is that of Ribosome-binding factor A from Francisella tularensis subsp. novicida (strain U112).